The primary structure comprises 435 residues: Glutamyl-tRNA reductase (435 aa).

Substrate is bound by residues 49–52 (TCNR), S109, 114–116 (ETQ), and Q120. C50 serves as the catalytic Nucleophile. Residue 189–194 (GAGEMS) participates in NADP(+) binding.

Belongs to the glutamyl-tRNA reductase family. As to quaternary structure, homodimer.

It catalyses the reaction (S)-4-amino-5-oxopentanoate + tRNA(Glu) + NADP(+) = L-glutamyl-tRNA(Glu) + NADPH + H(+). The protein operates within porphyrin-containing compound metabolism; protoporphyrin-IX biosynthesis; 5-aminolevulinate from L-glutamyl-tRNA(Glu): step 1/2. Functionally, catalyzes the NADPH-dependent reduction of glutamyl-tRNA(Glu) to glutamate 1-semialdehyde (GSA). This is Glutamyl-tRNA reductase from Listeria monocytogenes serotype 4b (strain CLIP80459).